The following is a 189-amino-acid chain: MGLLDAGITKHNVLITSVDNVLNWARLSSLWPMGFGLACCAIEMMATNASNYDLERFGIFPRSSPRQSDLMLVAGTVSMKMAERVVRLYEQMPEPRYVLSMGSCSNCGGPYWEHGYHVLKGVDRIIPVDVYVPGCPPRPESLIGGLMKVQELIRMEQIGISRADALKKLAEKSVDPRVVIEEERKALRA.

4 residues coordinate [4Fe-4S] cluster: cysteine 39, cysteine 40, cysteine 104, and cysteine 135.

It belongs to the complex I 20 kDa subunit family. As to quaternary structure, NDH-1 is composed of 14 different subunits. Subunits NuoB, C, D, E, F, and G constitute the peripheral sector of the complex. [4Fe-4S] cluster serves as cofactor.

It is found in the cell inner membrane. The catalysed reaction is a quinone + NADH + 5 H(+)(in) = a quinol + NAD(+) + 4 H(+)(out). Functionally, NDH-1 shuttles electrons from NADH, via FMN and iron-sulfur (Fe-S) centers, to quinones in the respiratory chain. The immediate electron acceptor for the enzyme in this species is believed to be a menaquinone. Couples the redox reaction to proton translocation (for every two electrons transferred, four hydrogen ions are translocated across the cytoplasmic membrane), and thus conserves the redox energy in a proton gradient. The polypeptide is NADH-quinone oxidoreductase subunit B (Chlorobium phaeobacteroides (strain DSM 266 / SMG 266 / 2430)).